A 105-amino-acid polypeptide reads, in one-letter code: Large ribosomal subunit protein uL24 (105 aa).

Belongs to the universal ribosomal protein uL24 family. As to quaternary structure, part of the 50S ribosomal subunit.

One of two assembly initiator proteins, it binds directly to the 5'-end of the 23S rRNA, where it nucleates assembly of the 50S subunit. In terms of biological role, one of the proteins that surrounds the polypeptide exit tunnel on the outside of the subunit. This Francisella tularensis subsp. novicida (strain U112) protein is Large ribosomal subunit protein uL24.